The primary structure comprises 800 residues: Phenylalanine--tRNA ligase beta subunit (800 aa).

Residues 39 to 147 enclose the tRNA-binding domain; sequence FDAIADIVVG…QDSVPGVRLV (109 aa). Residues 401-477 form the B5 domain; the sequence is WQAAQLRFRP…RVYGMDNIPP (77 aa). Mg(2+)-binding residues include Asp-455, Asp-461, Glu-464, and Glu-465. The FDX-ACB domain maps to 706–800; that stretch reads PVFPPVKRDI…SLTEALGVRI (95 aa).

This sequence belongs to the phenylalanyl-tRNA synthetase beta subunit family. Type 1 subfamily. As to quaternary structure, tetramer of two alpha and two beta subunits. Mg(2+) is required as a cofactor.

The protein resides in the cytoplasm. It catalyses the reaction tRNA(Phe) + L-phenylalanine + ATP = L-phenylalanyl-tRNA(Phe) + AMP + diphosphate + H(+). This chain is Phenylalanine--tRNA ligase beta subunit, found in Oleidesulfovibrio alaskensis (strain ATCC BAA-1058 / DSM 17464 / G20) (Desulfovibrio alaskensis).